A 139-amino-acid chain; its full sequence is Maximins 4/H3 type 4 (139 aa).

The first 18 residues, 1–18 (MNFKYIIAVSFLIASAYA), serve as a signal peptide directing secretion. Positions 19 to 43 (RSVQNDEQSLSQRDVLEEESLREIR) are excised as a propeptide. N70 bears the Asparagine amide mark. A propeptide spanning residues 74–118 (TAEEHEVMKRLEAVMRDLDSLDHPEEASERETRGFNQDEIAKEKR) is cleaved from the precursor. Residue I138 is modified to Isoleucine amide.

This sequence belongs to the bombinin family. In terms of tissue distribution, expressed by the skin glands.

It is found in the secreted. Its function is as follows. Maximin-4 shows antibacterial activity against both Gram-positive and Gram-negative bacteria. It also shows antimicrobial activity against the fungus C.albicans, but not against A.flavus nor P.uticale. It has little hemolytic activity. It does not possess a significant cytotoxicity against tumor cell lines. It does not possess a significant anti-HIV activity. Functionally, maximin-H3 shows antibacterial activity against both Gram-positive and Gram-negative bacteria. It also shows antimicrobial activity against the fungus C.albicans. Shows strong hemolytic activity. This Bombina maxima (Giant fire-bellied toad) protein is Maximins 4/H3 type 4.